The following is a 190-amino-acid chain: Apolipoprotein M (190 aa).

Residues 1 to 22 (MFHQVWAALLSLYGLLFNSMNQ) constitute a signal peptide (not cleaved). Cystine bridges form between C23–C169, C95–C185, and C130–C159. Residues E138 and R145 each coordinate tetradecanoate.

Belongs to the calycin superfamily. Lipocalin family. Highly divergent. In terms of assembly, interacts with LRP2; LRP2 mediates APOM renal uptake and subsequent lysosomal degradation. As to expression, expressed by the liver; secreted in plasma.

Its subcellular location is the secreted. In terms of biological role, probably involved in lipid transport. Can bind sphingosine-1-phosphate, myristic acid, palmitic acid and stearic acid, retinol, all-trans-retinoic acid and 9-cis-retinoic acid. This is Apolipoprotein M (Apom) from Mus musculus (Mouse).